Here is a 298-residue protein sequence, read N- to C-terminus: Probable endonuclease 4 (298 aa).

The Zn(2+) site is built by histidine 69, histidine 111, glutamate 146, aspartate 180, histidine 183, histidine 215, aspartate 228, histidine 230, and glutamate 260.

Belongs to the AP endonuclease 2 family. It depends on Zn(2+) as a cofactor.

The enzyme catalyses Endonucleolytic cleavage to 5'-phosphooligonucleotide end-products.. Its function is as follows. Endonuclease IV plays a role in DNA repair. It cleaves phosphodiester bonds at apurinic or apyrimidinic (AP) sites, generating a 3'-hydroxyl group and a 5'-terminal sugar phosphate. This chain is Probable endonuclease 4, found in Bacillus cereus (strain B4264).